Consider the following 211-residue polypeptide: Large ribosomal subunit protein bL25 (211 aa).

This sequence belongs to the bacterial ribosomal protein bL25 family. CTC subfamily. In terms of assembly, part of the 50S ribosomal subunit; part of the 5S rRNA/L5/L18/L25 subcomplex. Contacts the 5S rRNA. Binds to the 5S rRNA independently of L5 and L18.

Its function is as follows. This is one of the proteins that binds to the 5S RNA in the ribosome where it forms part of the central protuberance. The sequence is that of Large ribosomal subunit protein bL25 from Xanthomonas axonopodis pv. citri (strain 306).